Reading from the N-terminus, the 1209-residue chain is Protein FAM83H (1209 aa).

The segment at 1–286 (MARRSQSSSQ…LFAQSEPLVP (286 aa)) is DUF1669. Residues 1–286 (MARRSQSSSQ…LFAQSEPLVP (286 aa)) are mediates interaction with CSNK1A1 and is required for FAM83H activity in keratin cytoskeleton organization. Phosphoserine is present on residues Ser-512, Ser-513, Ser-515, Ser-522, Ser-639, and Ser-660. Disordered regions lie at residues 512 to 545 (SSAS…NLGQ), 615 to 664 (RDLL…FRSR), and 735 to 760 (KGPA…VVSQ). At Thr-749 the chain carries Phosphothreonine. 4 positions are modified to phosphoserine: Ser-752, Ser-778, Ser-806, and Ser-871. The interval 829–1056 (AQGRSLSPQG…EERGSRVRLA (228 aa)) is disordered. Residue Thr-873 is modified to Phosphothreonine. Phosphoserine is present on residues Ser-882, Ser-893, Ser-904, and Ser-915. Over residues 915 to 942 (SPTSGFPNRRGSPTTGLMEQKGSPTSTY) the composition is skewed to polar residues. A Phosphothreonine modification is found at Thr-917. Ser-926 carries the post-translational modification Phosphoserine. Thr-928 is subject to Phosphothreonine. Phosphoserine occurs at positions 937, 948, 959, 970, 977, 1035, 1041, and 1057. Position 1072 is a phosphothreonine (Thr-1072). 2 disordered regions span residues 1076–1147 (LEQI…EERD) and 1174–1193 (EAGS…RDSK). Phosphoserine occurs at positions 1080, 1098, and 1177.

It belongs to the FAM83 family. As to quaternary structure, directly interacts (via DUF1669) with casein kinase isoforms CSNK1A1, CSNK1A1L, CSNK1D and CSNK1E. Interaction with CSNK1A1 recruits CSNK1A1 to keratin filaments. Interacts with KRT18 and probably other keratins. Expressed in tooth follicle, eye, liver and kidney.

The protein localises to the cytoplasm. Its subcellular location is the cytoskeleton. In terms of biological role, may play a major role in the structural organization and calcification of developing enamel. May play a role in keratin cytoskeleton disassembly by recruiting CSNK1A1 to keratin filaments. Thereby, it may regulate epithelial cell migration. In Mus musculus (Mouse), this protein is Protein FAM83H.